Reading from the N-terminus, the 294-residue chain is Taste receptor type 2 member 143 (294 aa).

The Extracellular segment spans residues 1 to 7 (MPSTPTL). Residues 8–28 (IFIVIFFLVSVASMLQNGFMI) traverse the membrane as a helical segment. Residues 29-43 (IVLGREWMRNRALPA) are Cytoplasmic-facing. The chain crosses the membrane as a helical span at residues 44 to 64 (VDMIVASLASSRFCLHGIAIL). Residues 65 to 80 (NNFLASFDFCYQANFV) are Extracellular-facing. The helical transmembrane segment at 81–101 (GILWDFINTLILWLTAWLAIF) threads the bilayer. Residues 102-128 (YCVKISSFSHPVLFWLKWRISQLVPRL) are Cytoplasmic-facing. Residues 129-149 (LLVSLIMGGLSAIISATGNII) form a helical membrane-spanning segment. Topologically, residues 150 to 180 (ANQMIISQGFHGNCTFGHMSLDFYRYYYLSH) are extracellular. N-linked (GlcNAc...) asparagine glycosylation occurs at Asn162. Residues 181–201 (AVLMWFTPFFLFLVSIIFLMF) traverse the membrane as a helical segment. The Cytoplasmic segment spans residues 202 to 227 (SLYRHVEKMRGHRPGPWDPRTQAHTM). The helical transmembrane segment at 228–248 (ALKSLTVFITFYILFFLALII) threads the bilayer. Residues 249–260 (SSTKSKTMHSYW) lie on the Extracellular side of the membrane. Residues 261 to 281 (YWVREIIIYTGIFLNSIILVL) form a helical membrane-spanning segment. At 282–294 (SNPKLRKALKMRF) the chain is on the cytoplasmic side.

The protein belongs to the G-protein coupled receptor T2R family.

Its subcellular location is the membrane. Functionally, putative taste receptor which may play a role in the perception of bitterness. This is Taste receptor type 2 member 143 from Rattus norvegicus (Rat).